A 432-amino-acid polypeptide reads, in one-letter code: Glutamate-1-semialdehyde 2,1-aminomutase 2 (432 aa).

Lys-268 carries the post-translational modification N6-(pyridoxal phosphate)lysine.

The protein belongs to the class-III pyridoxal-phosphate-dependent aminotransferase family. HemL subfamily. In terms of assembly, homodimer. Pyridoxal 5'-phosphate is required as a cofactor.

The protein resides in the cytoplasm. The enzyme catalyses (S)-4-amino-5-oxopentanoate = 5-aminolevulinate. It participates in porphyrin-containing compound metabolism; protoporphyrin-IX biosynthesis; 5-aminolevulinate from L-glutamyl-tRNA(Glu): step 2/2. This Listeria innocua serovar 6a (strain ATCC BAA-680 / CLIP 11262) protein is Glutamate-1-semialdehyde 2,1-aminomutase 2.